The following is a 607-amino-acid chain: Inactive metallocarboxypeptidase ECM14 (607 aa).

Residues 1–21 form the signal peptide; the sequence is MRLFTHGQVLALLAFVNTISA. The propeptide occupies 22–174; it reads IPSFSTNSYP…QTIYESYPSP (153 aa). The Peptidase M14 domain maps to 202 to 522; it reads NYQPLSVIVP…NAVMMLGRFL (321 aa). Zn(2+) contacts are provided by His-264 and Glu-267. Residues 264–267, Arg-322, and 339–340 contribute to the substrate site; these read HARE and DR. An intrachain disulfide couples Cys-333 to Cys-356. Residue Asn-349 is glycosylated (N-linked (GlcNAc...) asparagine). His-396 contacts Zn(2+). 397–398 provides a ligand contact to substrate; the sequence is SY. Residues 539–607 form a disordered region; the sequence is QRPNKDDKPI…GWGFRRLRKR (69 aa). Acidic residues predominate over residues 550 to 571; sequence NDDDDDDNDDDDDDDDDADTND. Residues 573 to 590 are compositionally biased toward basic and acidic residues; sequence GIGRKDDSWVPDEYKGDN.

It belongs to the peptidase M14 family. Zn(2+) serves as cofactor.

It is found in the vacuole. Its subcellular location is the secreted. Inactive carboxypeptidase that may play a role in cell wall organization and biogenesis. The sequence is that of Inactive metallocarboxypeptidase ECM14 (ECM14) from Ajellomyces capsulatus (strain NAm1 / WU24) (Darling's disease fungus).